The following is a 256-amino-acid chain: Proteasome subunit alpha (256 aa).

The interval 235 to 256 is disordered; that stretch reads ELDSNGSDGNGDAPELNGGSSD.

This sequence belongs to the peptidase T1A family. The 20S proteasome core is composed of 14 alpha and 14 beta subunits that assemble into four stacked heptameric rings, resulting in a barrel-shaped structure. The two inner rings, each composed of seven catalytic beta subunits, are sandwiched by two outer rings, each composed of seven alpha subunits. The catalytic chamber with the active sites is on the inside of the barrel. Has a gated structure, the ends of the cylinder being occluded by the N-termini of the alpha-subunits. Is capped by the proteasome-associated ATPase, ARC.

It localises to the cytoplasm. It participates in protein degradation; proteasomal Pup-dependent pathway. The formation of the proteasomal ATPase ARC-20S proteasome complex, likely via the docking of the C-termini of ARC into the intersubunit pockets in the alpha-rings, may trigger opening of the gate for substrate entry. Interconversion between the open-gate and close-gate conformations leads to a dynamic regulation of the 20S proteasome proteolysis activity. Component of the proteasome core, a large protease complex with broad specificity involved in protein degradation. This Mycolicibacterium paratuberculosis (strain ATCC BAA-968 / K-10) (Mycobacterium paratuberculosis) protein is Proteasome subunit alpha.